Reading from the N-terminus, the 223-residue chain is Urease accessory protein UreF (223 aa).

The protein belongs to the UreF family. As to quaternary structure, ureD, UreF and UreG form a complex that acts as a GTP-hydrolysis-dependent molecular chaperone, activating the urease apoprotein by helping to assemble the nickel containing metallocenter of UreC. The UreE protein probably delivers the nickel.

It localises to the cytoplasm. Required for maturation of urease via the functional incorporation of the urease nickel metallocenter. This Rhizobium meliloti (strain 1021) (Ensifer meliloti) protein is Urease accessory protein UreF.